Reading from the N-terminus, the 323-residue chain is tRNA U34 carboxymethyltransferase (323 aa).

Carboxy-S-adenosyl-L-methionine contacts are provided by residues lysine 91, tryptophan 105, lysine 110, glycine 130, 152–154 (DPT), 181–182 (IE), methionine 196, tyrosine 200, and arginine 315.

It belongs to the class I-like SAM-binding methyltransferase superfamily. CmoB family. In terms of assembly, homotetramer.

It catalyses the reaction carboxy-S-adenosyl-L-methionine + 5-hydroxyuridine(34) in tRNA = 5-carboxymethoxyuridine(34) in tRNA + S-adenosyl-L-homocysteine + H(+). Its function is as follows. Catalyzes carboxymethyl transfer from carboxy-S-adenosyl-L-methionine (Cx-SAM) to 5-hydroxyuridine (ho5U) to form 5-carboxymethoxyuridine (cmo5U) at position 34 in tRNAs. This chain is tRNA U34 carboxymethyltransferase, found in Salmonella paratyphi B (strain ATCC BAA-1250 / SPB7).